Consider the following 75-residue polypeptide: Small ribosomal subunit protein bS21 (75 aa).

The protein belongs to the bacterial ribosomal protein bS21 family.

In Brucella abortus (strain S19), this protein is Small ribosomal subunit protein bS21.